An 890-amino-acid polypeptide reads, in one-letter code: MPPAHHGSGGRRRPGRGNKGKRDTEAGMTASPDPGYMRPETHAAPSQQTDVRSPASAREHRNADVGVAAPDALTPNAGEQKEVEGVAKVNVAVSSDQPPDWAPSQSDLPPSLSPTTASRPATSSRSPRARSRHSPVASSSAFSSPAPSASALTSASGVPEAPLAAPELKHTLAADEGNPEPRLEGPVERLHARQENPLTDSSDGSYILLEEGESQRACLDRKNRHLRQTTPPGVWTTADLASQNSHSASFASGFRRALLPSGGSGDHDEQASDCRASLRGMQRPCFGSPSTDTRMGAAEGLPLASRRRRQHWRRELRAFGAVALACLRASWHGMKRARLRATRWIDRNAATVRVACYTFLLLVTSTGNTICFKKMIDKMPNYSPCLTQVTTVVFVPVFFALSLYTDYAGGLPQEMADFPKRNFAVMGFLDSFSGVMAIIGAVHTTGTTQVVLQQSCIVFSLLASIVMLRKRFHAAHYLGALVIILGVLVVKLPDLLHPSSDGGGDVFVFNLLYLLSNLPTAVSCVYKEVAFRGVEMGTNYLQAWVALFQFLIGFLVLPLNALPVLGPQRVPLAELPASLWNGTRCLFGFNTIVTNCGGAGNMESPCDNCEGAWKYVGMYLSFNLLYNMFIIFVVKSGGAALTFLVSTLRLPVTALAFCSRAIMGDRAVPPKATDFYGLLVLILGLVIYRAGGIMKRRAQRRAVAAARGHTSSPMMLTPREEEQIGTIFVEEVFAAGELEDGGVTEEDETDDDTSEVEVHPVFSSVVASEPPHVYVHTKRHSHSDGGYHKLPACGSSPAAFTPFTQRMPGTGSESCSRRRNRDGDDERSPRSHACSFDEETGFAGGTGTGRHFSSPGTALSPNRVGGYEPPSMHAVQPAVIGKSRANNGCI.

Disordered regions lie at residues 1 to 163 (MPPA…EAPL) and 280 to 300 (GMQR…AAEG). Over 1–349 (MPPAHHGSGG…RATRWIDRNA (349 aa)) the chain is Cytoplasmic. A compositionally biased stretch (basic residues) spans 8 to 19 (SGGRRRPGRGNK). 2 stretches are compositionally biased toward low complexity: residues 102 to 126 (APSQ…SSRS) and 134 to 156 (SPVA…TSAS). Residues 350–372 (ATVRVACYTFLLLVTSTGNTICF) traverse the membrane as a helical segment. Residues 373–391 (KKMIDKMPNYSPCLTQVTT) lie on the Vacuolar side of the membrane. A helical membrane pass occupies residues 392-412 (VVFVPVFFALSLYTDYAGGLP). Residues 413–422 (QEMADFPKRN) lie on the Cytoplasmic side of the membrane. A helical membrane pass occupies residues 423 to 443 (FAVMGFLDSFSGVMAIIGAVH). Residues 444–447 (TTGT) are Vacuolar-facing. Residues 448–468 (TQVVLQQSCIVFSLLASIVML) form a helical membrane-spanning segment. The Cytoplasmic segment spans residues 469 to 471 (RKR). A helical transmembrane segment spans residues 472-492 (FHAAHYLGALVIILGVLVVKL). At 493 to 505 (PDLLHPSSDGGGD) the chain is on the vacuolar side. A helical membrane pass occupies residues 506-526 (VFVFNLLYLLSNLPTAVSCVY). The Cytoplasmic portion of the chain corresponds to 527–544 (KEVAFRGVEMGTNYLQAW). A helical membrane pass occupies residues 545–565 (VALFQFLIGFLVLPLNALPVL). The Vacuolar portion of the chain corresponds to 566–614 (GPQRVPLAELPASLWNGTRCLFGFNTIVTNCGGAGNMESPCDNCEGAWK). The N-linked (GlcNAc...) asparagine glycan is linked to asparagine 581. 2 cysteine pairs are disulfide-bonded: cysteine 585–cysteine 609 and cysteine 596–cysteine 606. A helical membrane pass occupies residues 615-634 (YVGMYLSFNLLYNMFIIFVV). Residues 635–640 (KSGGAA) lie on the Cytoplasmic side of the membrane. A helical membrane pass occupies residues 641-663 (LTFLVSTLRLPVTALAFCSRAIM). At 664–673 (GDRAVPPKAT) the chain is on the vacuolar side. Residues 674 to 694 (DFYGLLVLILGLVIYRAGGIM) traverse the membrane as a helical segment. The Cytoplasmic portion of the chain corresponds to 695–890 (KRRAQRRAVA…GKSRANNGCI (196 aa)). A disordered region spans residues 798-871 (AAFTPFTQRM…NRVGGYEPPS (74 aa)).

The protein belongs to the CRT-like transporter family.

It localises to the vacuole membrane. Its function is as follows. Nutrient transporter. Involved in maintaining the osmotic homeostasis of the digestive vacuole. Required for the proper organization of the endolysosomal system and, in turn, indirectly for microneme secretion and parasite invasion. Required for bradyzoite viability and cyst development. In Toxoplasma gondii, this protein is Chloroquine resistance transporter.